Consider the following 705-residue polypeptide: Structure-specific endonuclease subunit SLX1 homolog (705 aa).

Residues 4–90 enclose the GIY-YIG domain; that stretch reads RFHCVYLLTS…TASARLRHAI (87 aa). 2 disordered regions span residues 155–192 and 290–323; these read RASS…DSKG and ASFA…RVHT. Composition is skewed to polar residues over residues 160 to 175 and 310 to 320; these read RVGT…SLQG and STGSRTPSPQR. The SLX1-type zinc finger occupies 446 to 526; sequence CSLCTLPLQP…PSQPCPCPLC (81 aa). Residues 595–604 show a composition bias toward low complexity; the sequence is KGAGEAPGAA. Residues 595-628 form a disordered region; sequence KGAGEAPGAASTVRASTMHVGPARRDAPRVSSPS.

The protein belongs to the SLX1 family. Forms a heterodimer with a member of the SLX4 family. It depends on a divalent metal cation as a cofactor.

It is found in the nucleus. Functionally, catalytic subunit of a heterodimeric structure-specific endonuclease that resolves DNA secondary structures generated during DNA repair and recombination. Has endonuclease activity towards branched DNA substrates, introducing single-strand cuts in duplex DNA close to junctions with ss-DNA. The protein is Structure-specific endonuclease subunit SLX1 homolog of Leishmania infantum.